Reading from the N-terminus, the 724-residue chain is Protein BCH1 (724 aa).

Positions 51–65 (TTATASANDNGATSN) are enriched in low complexity. A disordered region spans residues 51-71 (TTATASANDNGATSNINGQDP). A CHS5-binding region spans residues 711–724 (LNFLKNFTNDTFDN).

It belongs to the CHAPS family. Component of the CHS5/6 complex composed of the 4 CHAPS proteins BCH1, BCH2, BUD7, and CHS6 as well as at least CHS5 and GTP-bound ARF1. The complex interacts with the cargo protein CHS3.

The protein localises to the golgi apparatus. Its subcellular location is the trans-Golgi network membrane. Its function is as follows. Member of the CHS5-ARF1P-binding proteins (CHAPS) which mediates export of specific cargo proteins, including chitin synthase CHS3. The polypeptide is Protein BCH1 (BCH1) (Saccharomyces cerevisiae (strain ATCC 204508 / S288c) (Baker's yeast)).